Consider the following 222-residue polypeptide: UPF0585 protein CG18661 (222 aa).

Belongs to the UPF0585 family.

This is UPF0585 protein CG18661 from Drosophila melanogaster (Fruit fly).